The following is a 41-amino-acid chain: Photosystem I reaction center subunit IX (41 aa).

A helical transmembrane segment spans residues 7–27; it reads YLSTAPVLATVWMIITAGILI.

Belongs to the PsaJ family.

The protein resides in the cellular thylakoid membrane. Its function is as follows. May help in the organization of the PsaE and PsaF subunits. The sequence is that of Photosystem I reaction center subunit IX from Trichodesmium erythraeum (strain IMS101).